The sequence spans 596 residues: Probable tripeptidyl-peptidase SED2 (596 aa).

Residues Met-1 to Ala-16 form the signal peptide. A propeptide spans Lys-17–Ala-203 (removed in mature form). The region spanning Leu-210–Pro-596 is the Peptidase S53 domain. Asn-265 is a glycosylation site (N-linked (GlcNAc...) asparagine). Residues Glu-286 and Asp-290 each act as charge relay system in the active site. N-linked (GlcNAc...) asparagine glycosylation occurs at Asn-403. The Charge relay system role is filled by Ser-501. The Ca(2+) site is built by Asp-543 and Ile-544. N-linked (GlcNAc...) asparagine glycosylation occurs at Asn-572. Residues Gly-576 and Asp-578 each contribute to the Ca(2+) site.

It depends on Ca(2+) as a cofactor.

Its subcellular location is the secreted. The protein resides in the extracellular space. It carries out the reaction Release of an N-terminal tripeptide from a polypeptide.. Functionally, secreted tripeptidyl-peptidase which degrades proteins at acidic pHs and is involved in virulence. The protein is Probable tripeptidyl-peptidase SED2 (SED2) of Arthroderma benhamiae (strain ATCC MYA-4681 / CBS 112371) (Trichophyton mentagrophytes).